Here is a 1149-residue protein sequence, read N- to C-terminus: Probable phospholipid-transporting ATPase IA (1149 aa).

The Cytoplasmic segment spans residues Met1 to Leu65. Phosphoserine is present on Ser25. Thr28 carries the post-translational modification Phosphothreonine. Ser29 carries the phosphoserine modification. Residues Pro66–Leu86 traverse the membrane as a helical segment. Over Leu87 to Asp92 the chain is Extracellular. A helical membrane pass occupies residues Val93–Lys115. The Cytoplasmic portion of the chain corresponds to Glu116–Gln297. A helical membrane pass occupies residues Ile298 to Trp319. The Extracellular portion of the chain corresponds to Asn320–Phe344. A helical membrane pass occupies residues Leu345–Val366. At Lys367 to Lys842 the chain is on the cytoplasmic side. Asp409 functions as the 4-aspartylphosphate intermediate in the catalytic mechanism. ATP contacts are provided by residues Asp409, Lys410, Thr411, Glu493, Phe534, Lys557, Arg590, Thr670, Gly671, Asp672, Ala726 to Thr733, Arg760, and Lys766. Asp409 is a binding site for Mg(2+). Thr411 lines the Mg(2+) pocket. Asp786 is a binding site for Mg(2+). ATP is bound by residues Asn789 and Asp790. Asp790 serves as a coordination point for Mg(2+). Residues Cys843–Phe863 form a helical membrane-spanning segment. At Val864 to Arg875 the chain is on the extracellular side. The helical transmembrane segment at Trp876–Ile895 threads the bilayer. At Phe896–Val925 the chain is on the cytoplasmic side. Residues Phe926–Ala947 traverse the membrane as a helical segment. Residues Leu948–Asp961 are Extracellular-facing. The helical transmembrane segment at Tyr962–Glu984 threads the bilayer. The Cytoplasmic segment spans residues Thr985–Trp990. A helical transmembrane segment spans residues Phe991–Ser1011. Residues Ser1012–Met1029 are Extracellular-facing. Residues Leu1030–Lys1055 traverse the membrane as a helical segment. Over Val1056 to Trp1149 the chain is Cytoplasmic. Gly1080–Ser1087 contributes to the ATP binding site. Ser1111 bears the Phosphoserine mark.

This sequence belongs to the cation transport ATPase (P-type) (TC 3.A.3) family. Type IV subfamily. In terms of assembly, component of a P4-ATPase flippase complex which consists of a catalytic alpha subunit and an accessory beta subunit. Interacts with TMEM30A to form a flippase complex; this complex forms an intermediate phosphoenzyme. Interacts with TMEM30B; this interaction is reported conflictingly. The cofactor is Mg(2+). In terms of processing, cleaved by calpain in a caspase- and calcium influx-dependent manner during platelet apoptosis leading to a 100 kDa polypeptide. In terms of tissue distribution, kidney.

The protein resides in the cytoplasmic vesicle. Its subcellular location is the secretory vesicle. It is found in the chromaffin granule membrane. It localises to the cytoplasmic granule. The protein localises to the cell membrane. The protein resides in the endoplasmic reticulum. Its subcellular location is the golgi apparatus. The enzyme catalyses ATP + H2O + phospholipidSide 1 = ADP + phosphate + phospholipidSide 2.. The catalysed reaction is a 1,2-diacyl-sn-glycero-3-phospho-L-serine(out) + ATP + H2O = a 1,2-diacyl-sn-glycero-3-phospho-L-serine(in) + ADP + phosphate + H(+). Functionally, catalytic component of a P4-ATPase flippase complex which catalyzes the hydrolysis of ATP coupled to the transport of aminophospholipids from the outer to the inner leaflet of various membranes and ensures the maintenance of asymmetric distribution of phospholipids. Phospholipid translocation also seems to be implicated in vesicle formation and in uptake of lipid signaling molecules. In vitro, its ATPase activity is selectively and stereospecifically stimulated by phosphatidylserine (PS). The flippase complex ATP8A1:TMEM30A seems to play a role in regulation of cell migration probably involving flippase-mediated translocation of phosphatidylethanolamine (PE) at the cell membrane. Acts as aminophospholipid translocase at the cell membrane in neuronal cells. This is Probable phospholipid-transporting ATPase IA from Bos taurus (Bovine).